Here is a 75-residue protein sequence, read N- to C-terminus: MSIHISSKFEEAMKELENIVAELESGNVPLERSVELFNKGKELHKYCDKVIKEISLHIESVDPDDKELSAKFSDD.

Belongs to the XseB family. In terms of assembly, heterooligomer composed of large and small subunits.

The protein resides in the cytoplasm. The catalysed reaction is Exonucleolytic cleavage in either 5'- to 3'- or 3'- to 5'-direction to yield nucleoside 5'-phosphates.. Bidirectionally degrades single-stranded DNA into large acid-insoluble oligonucleotides, which are then degraded further into small acid-soluble oligonucleotides. This chain is Exodeoxyribonuclease 7 small subunit, found in Anaplasma phagocytophilum (strain HZ).